Consider the following 113-residue polypeptide: uncharacterized protein (113 aa).

This is an uncharacterized protein from Ureaplasma parvum serovar 3 (strain ATCC 700970).